The primary structure comprises 101 residues: Small ribosomal subunit protein bS18c (101 aa).

It belongs to the bacterial ribosomal protein bS18 family. Component of the chloroplast small ribosomal subunit (SSU). Mature 70S chloroplast ribosomes of higher plants consist of a small (30S) and a large (50S) subunit. The 30S small subunit contains 1 molecule of ribosomal RNA (16S rRNA) and 24 different proteins. The 50S large subunit contains 3 rRNA molecules (23S, 5S and 4.5S rRNA) and 33 different proteins.

The protein localises to the plastid. It is found in the chloroplast. Component of the chloroplast ribosome (chloro-ribosome), a dedicated translation machinery responsible for the synthesis of chloroplast genome-encoded proteins, including proteins of the transcription and translation machinery and components of the photosynthetic apparatus. The polypeptide is Small ribosomal subunit protein bS18c (RPS18) (Spinacia oleracea (Spinach)).